A 354-amino-acid polypeptide reads, in one-letter code: Guanine nucleotide-binding protein alpha-3 subunit (354 aa).

Gly-2 carries N-myristoyl glycine lipidation. Cys-4 is lipidated: S-palmitoyl cysteine. Positions 32–354 constitute a G-alpha domain; the sequence is KVVKLLLLGA…QANLQGCGLY (323 aa). The tract at residues 35–48 is G1 motif; it reads KLLLLGAGECGKST. GTP contacts are provided by residues 40–47, 176–182, 201–205, 270–273, and Ala-326; these read GAGECGKS, LLSRIKT, DVGGQ, and NKKD. Ser-47 and Thr-182 together coordinate Mg(2+). The segment at 174-182 is G2 motif; that stretch reads DILLSRIKT. The interval 197-206 is G3 motif; that stretch reads FRVFDVGGQR. The tract at residues 266-273 is G4 motif; sequence ILFLNKKD. The interval 324–329 is G5 motif; it reads TCATDT.

It belongs to the G-alpha family. G(q) subfamily. As to quaternary structure, g proteins are composed of 3 units; alpha, beta and gamma. The alpha chain contains the guanine nucleotide binding site.

In terms of biological role, guanine nucleotide-binding proteins (G proteins) are involved as modulators or transducers in various transmembrane signaling systems. Promotes transcription of 3',5'-cyclic phosphodiesterases pde-1 and pde-5, leading to reduced cGMP levels in sensory neurons. This causes suppression of insulin production and signaling which leads to increased daf-16 activity and contributes to increased adult lifespan and resistance to oxidative stress. In addition, by reducing cGMP levels, inhibits TGF-beta signaling pathways. Involved in behavioral response to P.aeruginosa by controlling the expression of daf-7, a member of the TGF-beta family, in ASJ sensory neurons. The chain is Guanine nucleotide-binding protein alpha-3 subunit (gpa-3) from Caenorhabditis briggsae.